A 258-amino-acid chain; its full sequence is Transcription cofactor vestigial-like protein 1 (258 aa).

2 stretches are compositionally biased toward polar residues: residues 55 to 65 and 74 to 87; these read PQELTPSSQSE and SMSP…SPWT. The interval 55-93 is disordered; that stretch reads PQELTPSSQSEGVMLKNDDSMSPNQWRYSSPWTKPQPEV.

It belongs to the vestigial family. Interacts with TEFs.

It is found in the nucleus. In terms of biological role, may act as a specific coactivator for the mammalian TEFs. The protein is Transcription cofactor vestigial-like protein 1 (VGLL1) of Homo sapiens (Human).